A 147-amino-acid polypeptide reads, in one-letter code: Transmembrane protein 210 (147 aa).

An N-terminal signal peptide occupies residues 1–31 (MAPCPQPESCPAGSPLGLICLSLLLIPASAG). Residues 32-47 (TYCECSLGLSREALIA) are Extracellular-facing. Residues 48–68 (LIVVLAGVSASCFCALVVVAI) form a helical membrane-spanning segment. Topologically, residues 69–147 (GVFRAKGDTC…PPPPPPPLPQ (79 aa)) are cytoplasmic. A disordered region spans residues 128 to 147 (TMTAPLEPPPPPPPPPPLPQ). The segment covering 133–147 (LEPPPPPPPPPPLPQ) has biased composition (pro residues).

Its subcellular location is the membrane. It localises to the cytoplasmic vesicle. It is found in the secretory vesicle. The protein resides in the acrosome. This chain is Transmembrane protein 210 (Tmem210), found in Mus musculus (Mouse).